The sequence spans 181 residues: Adenine phosphoribosyltransferase (181 aa).

It belongs to the purine/pyrimidine phosphoribosyltransferase family. In terms of assembly, homodimer.

The protein resides in the cytoplasm. It carries out the reaction AMP + diphosphate = 5-phospho-alpha-D-ribose 1-diphosphate + adenine. It functions in the pathway purine metabolism; AMP biosynthesis via salvage pathway; AMP from adenine: step 1/1. Functionally, catalyzes a salvage reaction resulting in the formation of AMP, that is energically less costly than de novo synthesis. The protein is Adenine phosphoribosyltransferase of Methylorubrum populi (strain ATCC BAA-705 / NCIMB 13946 / BJ001) (Methylobacterium populi).